Here is a 290-residue protein sequence, read N- to C-terminus: Release factor glutamine methyltransferase (290 aa).

2 residues coordinate S-adenosyl-L-methionine: aspartate 140 and asparagine 181. Residue 181-184 coordinates substrate; the sequence is NPPY.

The protein belongs to the protein N5-glutamine methyltransferase family. PrmC subfamily.

The enzyme catalyses L-glutaminyl-[peptide chain release factor] + S-adenosyl-L-methionine = N(5)-methyl-L-glutaminyl-[peptide chain release factor] + S-adenosyl-L-homocysteine + H(+). Methylates the class 1 translation termination release factors RF1/PrfA and RF2/PrfB on the glutamine residue of the universally conserved GGQ motif. The polypeptide is Release factor glutamine methyltransferase (Chlamydia trachomatis serovar D (strain ATCC VR-885 / DSM 19411 / UW-3/Cx)).